We begin with the raw amino-acid sequence, 412 residues long: MYRLKCDVKSYGWGKVGHESLAAKLAEAGYGFEVDPNTPYAELWMGSHPSGPSFVMQTGKPLSELLTPETVGEKVYKKYGKQLPFLFKVLSINKVLSIQAHPDKPLGKQLHKTNPKEYKDDNHKPEMAVALTEFDALCGFRPVKQIEQFLDSIAPLREFVGEEAVRQFKGTVKQDERKALETLFNELMHKDEKRIQEFTPQLVQLAKSDANNFGGTEYGGKAFSDLIIHLNSQFPDDIGLFVTPFLNYVRLHPGEAVFLRALDPHAYVSGNIIECMAASDNVIRLGFTPKFKDIETLVNNLTYQTADAKSQLTQPVPFAKACGSGKTLLYDPPIEEFSILQTKVSPGQKQCIRGINGPSILLVTEGSGILNGDKGDVASISPGFVYFISANFPLTISATSEPVVVYQAFCEI.

The Zn(2+) site is built by glutamine 99, histidine 101, glutamate 126, and histidine 265. Arginine 284 is an active-site residue.

This sequence belongs to the mannose-6-phosphate isomerase type 1 family. Requires Zn(2+) as cofactor.

The protein resides in the cytoplasm. The protein localises to the nucleus. The enzyme catalyses D-mannose 6-phosphate = D-fructose 6-phosphate. Its pathway is nucleotide-sugar biosynthesis; GDP-alpha-D-mannose biosynthesis; alpha-D-mannose 1-phosphate from D-fructose 6-phosphate: step 1/2. Its function is as follows. Involved in the synthesis of the GDP-mannose and dolichol-phosphate-mannose required for a number of critical mannosyl transfer reactions. In Schizosaccharomyces pombe (strain 972 / ATCC 24843) (Fission yeast), this protein is Mannose-6-phosphate isomerase (pmi40).